The primary structure comprises 359 residues: Membrane-bound lytic murein transglycosylase C (359 aa).

A signal peptide spans 1-16 (MKKYLALALIAPLLIS). Cysteine 17 is lipidated: N-palmitoyl cysteine. Cysteine 17 carries S-diacylglycerol cysteine lipidation.

This sequence belongs to the transglycosylase Slt family.

Its subcellular location is the cell outer membrane. The catalysed reaction is Exolytic cleavage of the (1-&gt;4)-beta-glycosidic linkage between N-acetylmuramic acid (MurNAc) and N-acetylglucosamine (GlcNAc) residues in peptidoglycan, from either the reducing or the non-reducing ends of the peptidoglycan chains, with concomitant formation of a 1,6-anhydrobond in the MurNAc residue.. Murein-degrading enzyme. May play a role in recycling of muropeptides during cell elongation and/or cell division. In Escherichia fergusonii (strain ATCC 35469 / DSM 13698 / CCUG 18766 / IAM 14443 / JCM 21226 / LMG 7866 / NBRC 102419 / NCTC 12128 / CDC 0568-73), this protein is Membrane-bound lytic murein transglycosylase C.